The primary structure comprises 48 residues: ATP synthase protein 8 (48 aa).

A helical membrane pass occupies residues 13 to 32 (LTYGFLLMITLLILFSQFFL).

It belongs to the ATPase protein 8 family. As to quaternary structure, F-type ATPases have 2 components, CF(1) - the catalytic core - and CF(0) - the membrane proton channel. In yeast, the dimeric form of ATP synthase consists of 17 polypeptides: alpha, beta, gamma, delta, epsilon, 4 (B), 5 (OSCP), 6 (A), 8, 9 (C), d, E (Tim11), f, g, h, i/j and k.

Its subcellular location is the mitochondrion membrane. In terms of biological role, mitochondrial membrane ATP synthase (F(1)F(0) ATP synthase or Complex V) produces ATP from ADP in the presence of a proton gradient across the membrane which is generated by electron transport complexes of the respiratory chain. F-type ATPases consist of two structural domains, F(1) - containing the extramembraneous catalytic core and F(0) - containing the membrane proton channel, linked together by a central stalk and a peripheral stalk. During catalysis, ATP synthesis in the catalytic domain of F(1) is coupled via a rotary mechanism of the central stalk subunits to proton translocation. Part of the complex F(0) domain. Minor subunit located with subunit a in the membrane. This is ATP synthase protein 8 (ATP8) from Saccharomyces cerevisiae (strain ATCC 204508 / S288c) (Baker's yeast).